Here is a 34-residue protein sequence, read N- to C-terminus: Beta-theraphotoxin-Pmu1a (34 aa).

3 disulfide bridges follow: Cys3–Cys18, Cys10–Cys23, and Cys17–Cys30. The residue at position 34 (Leu34) is a Leucine amide.

The protein belongs to the neurotoxin 10 (Hwtx-1) family. 34 (Jztx-26) subfamily. In terms of tissue distribution, expressed by the venom gland.

It is found in the secreted. Its function is as follows. Spider venom neurotoxin that blocks voltage-gated sodium channels Nav1.3/SCN3A and Nav1.8/SCN10A in human (IC(50)=2 uM and IC(50)=4 uM, respectively) and rat (IC(50)=2 uM and IC(50)=2.5 uM, respectively). This is Beta-theraphotoxin-Pmu1a from Pterinochilus murinus (Mombasa golden starburst baboon spider).